We begin with the raw amino-acid sequence, 44 residues long: Thymosin beta-4, Y-chromosomal (44 aa).

Positions 1-44 are disordered; that stretch reads MSDKPGMAEIEKFDKSKLKKTETQEKNPLSSKETIEQERQAGES. 2 stretches are compositionally biased toward basic and acidic residues: residues 9–25 and 33–44; these read EIEK…ETQE and ETIEQERQAGES.

It belongs to the thymosin beta family. Ubiquitous.

Its subcellular location is the cytoplasm. The protein localises to the cytoskeleton. Its function is as follows. Plays an important role in the organization of the cytoskeleton. Binds to and sequesters actin monomers (G actin) and therefore inhibits actin polymerization. The protein is Thymosin beta-4, Y-chromosomal (TMSB4Y) of Homo sapiens (Human).